A 391-amino-acid chain; its full sequence is MLAHKSLLSFTTQWATLMPSPSTFLASRPRGPAKISAVAAPVRPALKHQNKIHTMPPEKMEIFKSLDGWAKDQILPLLKPVDQCWQPASFLPDPALPFSEFTDQVRELRERTASLPDEYFVVLVGDMITEDALPTYQTMINTLDGVRDETGASESAWASWTRAWTAEENRHGDLLRTYLYLSGRVDMLMVERTVQHLIGSGMDPGTENNPYLGFVYTSFQERATFVSHGNTARLAKSAGDPVLARICGTIAADEKRHENAYVRIVEKLLEIDPNGAVSAVADMMRKKITMPAHLMTDGRDPMLFEHFSAVAQRLEVYTADDYADILEFLVGRWRLEKLEGLTGEGQRAQEFVCGLAQRIRRLQERADERAKKLKKTHEVCFSWIFDKQISV.

A chloroplast-targeting transit peptide spans 1 to 38 (MLAHKSLLSFTTQWATLMPSPSTFLASRPRGPAKISAV). Residues Glu130, Glu168, His171, Glu221, Glu254, and His257 each coordinate Fe cation.

The protein belongs to the fatty acid desaturase type 2 family. In terms of assembly, homodimer. Requires Fe(2+) as cofactor.

Its subcellular location is the plastid. The protein localises to the chloroplast. The catalysed reaction is octadecanoyl-[ACP] + 2 reduced [2Fe-2S]-[ferredoxin] + O2 + 2 H(+) = (9Z)-octadecenoyl-[ACP] + 2 oxidized [2Fe-2S]-[ferredoxin] + 2 H2O. The protein operates within lipid metabolism; fatty acid metabolism. Functionally, converts stearoyl-ACP to oleoyl-ACP by introduction of a cis double bond between carbons 9 and 10 of the acyl chain. The protein is Stearoyl-[acyl-carrier-protein] 9-desaturase 6, chloroplastic (S-ACP-DES6) of Arabidopsis thaliana (Mouse-ear cress).